The following is a 273-amino-acid chain: Large ribosomal subunit protein uL2 (273 aa).

Disordered regions lie at residues threonine 28–glycine 55 and glycine 222–lysine 273. The span at tyrosine 255 to lysine 273 shows a compositional bias: basic residues.

The protein belongs to the universal ribosomal protein uL2 family. In terms of assembly, part of the 50S ribosomal subunit. Forms a bridge to the 30S subunit in the 70S ribosome.

One of the primary rRNA binding proteins. Required for association of the 30S and 50S subunits to form the 70S ribosome, for tRNA binding and peptide bond formation. It has been suggested to have peptidyltransferase activity; this is somewhat controversial. Makes several contacts with the 16S rRNA in the 70S ribosome. In Treponema pallidum (strain Nichols), this protein is Large ribosomal subunit protein uL2.